We begin with the raw amino-acid sequence, 265 residues long: NADH dehydrogenase [ubiquinone] iron-sulfur protein 3, mitochondrial (265 aa).

The transit peptide at 1–33 (MAALIRNLGARAAVAALSAKHVVPAAGSTALRM) directs the protein to the mitochondrion.

It belongs to the complex I 30 kDa subunit family. In terms of assembly, part of the mitochondrial membrane respiratory chain NADH dehydrogenase (Complex I). Interacts with sicily; interaction is stronger with unprocessed sicily protein.

Its subcellular location is the mitochondrion. It catalyses the reaction a ubiquinone + NADH + 5 H(+)(in) = a ubiquinol + NAD(+) + 4 H(+)(out). Its function is as follows. Core subunit of the mitochondrial membrane respiratory chain NADH dehydrogenase (Complex I) that is believed to belong to the minimal assembly required for catalysis. Complex I functions in the transfer of electrons from NADH to the respiratory chain. The immediate electron acceptor for the enzyme is believed to be ubiquinone. The chain is NADH dehydrogenase [ubiquinone] iron-sulfur protein 3, mitochondrial from Drosophila melanogaster (Fruit fly).